The sequence spans 226 residues: REKEELNVSSETVESLSSNEPDSSSEESITHINKEKSQKFKHEGQQQREVEHQDKISRFVQPQPVVYPYAEPVPYAVVPQNILVLAQPPIVPFLQPEIMEVSQAKETILPKRKVMPFLKSPIVPFSERQILNPTNGENLRLPVHLIQPFMHQVPQSLLQTLMLPSQPVLSPPQSKVAPFPQPVVPYPQRDTPVQAFLLYQDPQLGLTGEFDPATQPIVPVHNPVIV.

The interval 1–51 is disordered; the sequence is REKEELNVSSETVESLSSNEPDSSSEESITHINKEKSQKFKHEGQQQREVE. The residue at position 9 (S9) is a Phosphoserine. T12 carries the post-translational modification Phosphothreonine. S15, S17, S18, and S25 each carry phosphoserine. Over residues 28–51 the composition is skewed to basic and acidic residues; that stretch reads SITHINKEKSQKFKHEGQQQREVE.

This sequence belongs to the beta-casein family. Post-translationally, there are at least three different forms found in milk, with varying degrees of phosphorylation. These include form 5-P which is phosphorylated at three sites, this form is present in low amounts, form 6-P which is phosphorylated at six sites, and form 7-P which is phosphorylated at seven sites. In terms of tissue distribution, mammary gland specific. Secreted in milk.

It localises to the secreted. Its function is as follows. Important role in determination of the surface properties of the casein micelles. The protein is Beta-casein of Equus asinus (Donkey).